A 361-amino-acid chain; its full sequence is Large-conductance mechanosensitive channel MscMJLR (361 aa).

A run of 5 helical transmembrane segments spans residues 20–40 (ILSL…NALI), 65–85 (LPVA…FLYL), 89–109 (LKTA…VVFF), 137–157 (IVVL…LLLI), and 177–197 (LAVA…LIIL).

This sequence belongs to the MscS (TC 1.A.23) family.

It is found in the cell membrane. Large-conductance mechanosensitive channel that opens in response to stretch forces in the membrane lipid bilayer. Selective for cations. Rectifies with voltage. This Methanocaldococcus jannaschii (strain ATCC 43067 / DSM 2661 / JAL-1 / JCM 10045 / NBRC 100440) (Methanococcus jannaschii) protein is Large-conductance mechanosensitive channel MscMJLR.